Reading from the N-terminus, the 520-residue chain is Bifunctional purine biosynthesis protein PurH (520 aa).

The MGS-like domain occupies 1-146 (MAPVALLSVS…KNHADVAVLT (146 aa)).

Belongs to the PurH family.

The enzyme catalyses (6R)-10-formyltetrahydrofolate + 5-amino-1-(5-phospho-beta-D-ribosyl)imidazole-4-carboxamide = 5-formamido-1-(5-phospho-D-ribosyl)imidazole-4-carboxamide + (6S)-5,6,7,8-tetrahydrofolate. The catalysed reaction is IMP + H2O = 5-formamido-1-(5-phospho-D-ribosyl)imidazole-4-carboxamide. The protein operates within purine metabolism; IMP biosynthesis via de novo pathway; 5-formamido-1-(5-phospho-D-ribosyl)imidazole-4-carboxamide from 5-amino-1-(5-phospho-D-ribosyl)imidazole-4-carboxamide (10-formyl THF route): step 1/1. It functions in the pathway purine metabolism; IMP biosynthesis via de novo pathway; IMP from 5-formamido-1-(5-phospho-D-ribosyl)imidazole-4-carboxamide: step 1/1. The polypeptide is Bifunctional purine biosynthesis protein PurH (Synechococcus sp. (strain CC9605)).